A 211-amino-acid chain; its full sequence is Large ribosomal subunit protein uL4 (211 aa).

The disordered stretch occupies residues 44-90 (ERQGTHSTLTKGEVRGGGKKPWRQKHTGKARTGSTRNPHWTGGGVVF). Residues 60 to 72 (GGKKPWRQKHTGK) are compositionally biased toward basic residues.

The protein belongs to the universal ribosomal protein uL4 family. In terms of assembly, part of the 50S ribosomal subunit.

In terms of biological role, one of the primary rRNA binding proteins, this protein initially binds near the 5'-end of the 23S rRNA. It is important during the early stages of 50S assembly. It makes multiple contacts with different domains of the 23S rRNA in the assembled 50S subunit and ribosome. Its function is as follows. Forms part of the polypeptide exit tunnel. This Ureaplasma urealyticum serovar 10 (strain ATCC 33699 / Western) protein is Large ribosomal subunit protein uL4.